Here is a 115-residue protein sequence, read N- to C-terminus: NADH-ubiquinone oxidoreductase chain 3 (115 aa).

3 helical membrane-spanning segments follow: residues 5–25 (LTFM…FWLP), 55–75 (FFLV…LLPL), and 86–106 (LMLT…AYEW).

It belongs to the complex I subunit 3 family. As to quaternary structure, core subunit of respiratory chain NADH dehydrogenase (Complex I) which is composed of 45 different subunits. Interacts with TMEM186. Interacts with TMEM242.

Its subcellular location is the mitochondrion inner membrane. The catalysed reaction is a ubiquinone + NADH + 5 H(+)(in) = a ubiquinol + NAD(+) + 4 H(+)(out). Its function is as follows. Core subunit of the mitochondrial membrane respiratory chain NADH dehydrogenase (Complex I) which catalyzes electron transfer from NADH through the respiratory chain, using ubiquinone as an electron acceptor. Essential for the catalytic activity of complex I. The chain is NADH-ubiquinone oxidoreductase chain 3 from Avahi unicolor (Sambirano woolly lemur).